A 156-amino-acid chain; its full sequence is Transcription elongation factor GreA (156 aa).

Positions 1–84 form a coiled coil; the sequence is MAKYTISKHR…IEDVMRSTDE (84 aa).

It belongs to the GreA/GreB family.

In terms of biological role, necessary for efficient RNA polymerase transcription elongation past template-encoded arresting sites. The arresting sites in DNA have the property of trapping a certain fraction of elongating RNA polymerases that pass through, resulting in locked ternary complexes. Cleavage of the nascent transcript by cleavage factors such as GreA or GreB allows the resumption of elongation from the new 3'terminus. GreA releases sequences of 2 to 3 nucleotides. The chain is Transcription elongation factor GreA from Ureaplasma urealyticum serovar 10 (strain ATCC 33699 / Western).